Here is a 322-residue protein sequence, read N- to C-terminus: Zinc finger C2HC domain-containing protein CBG14627 (322 aa).

2 C2HC/C3H-type zinc fingers span residues 9–38 (PVYPCPICGRKFVKSSLEKHESACRKLATL) and 119–148 (DYVQCEYCSRNFNAAAAERHIPFCREQTTR). Zn(2+)-binding residues include C13, C16, H28, C32, C123, C126, H138, and C142. The segment at 144 to 322 (EQTTRKQGGK…SRNNSRSRIF (179 aa)) is disordered. The segment covering 148 to 168 (RKQGGKSSAGNRGLTSNNYRS) has biased composition (polar residues). Residues 171–219 (SKHEGRKQESSSRNGSAERKTTTRGRDGSLSRARRDDSNDLTNRRKSLE) are compositionally biased toward basic and acidic residues. Over residues 220–238 (TRSQLTTGQANNRTTSLSA) the composition is skewed to polar residues. Over residues 278 to 294 (TTTTASASRSGSGSSSR) the composition is skewed to low complexity. Positions 296-305 (RTRDESRESR) are enriched in basic and acidic residues. Over residues 311–322 (SNSRNNSRSRIF) the composition is skewed to low complexity.

Belongs to the ZC2HC1 family. Zn(2+) is required as a cofactor.

This Caenorhabditis briggsae protein is Zinc finger C2HC domain-containing protein CBG14627.